The primary structure comprises 194 residues: Protein GrpE (194 aa).

Residues 1–24 (MEEKDKEEKVTGENLEPEDKNLEQ) are compositionally biased toward basic and acidic residues. Residues 1–41 (MEEKDKEEKVTGENLEPEDKNLEQEDKEEVVGPQEEQQIDE) are disordered.

It belongs to the GrpE family. Homodimer.

The protein localises to the cytoplasm. Its function is as follows. Participates actively in the response to hyperosmotic and heat shock by preventing the aggregation of stress-denatured proteins, in association with DnaK and GrpE. It is the nucleotide exchange factor for DnaK and may function as a thermosensor. Unfolded proteins bind initially to DnaJ; upon interaction with the DnaJ-bound protein, DnaK hydrolyzes its bound ATP, resulting in the formation of a stable complex. GrpE releases ADP from DnaK; ATP binding to DnaK triggers the release of the substrate protein, thus completing the reaction cycle. Several rounds of ATP-dependent interactions between DnaJ, DnaK and GrpE are required for fully efficient folding. In Carboxydothermus hydrogenoformans (strain ATCC BAA-161 / DSM 6008 / Z-2901), this protein is Protein GrpE.